The chain runs to 135 residues: S-adenosylmethionine decarboxylase proenzyme (135 aa).

Residue serine 64 is the Schiff-base intermediate with substrate; via pyruvic acid of the active site. Serine 64 bears the Pyruvic acid (Ser); by autocatalysis mark. Histidine 69 (proton acceptor; for processing activity) is an active-site residue. The active-site Proton donor; for catalytic activity is cysteine 84.

It belongs to the prokaryotic AdoMetDC family. Type 1 subfamily. As to quaternary structure, heterotetramer of two alpha and two beta chains arranged as a dimer of alpha/beta heterodimers. Pyruvate serves as cofactor. Post-translationally, is synthesized initially as an inactive proenzyme. Formation of the active enzyme involves a self-maturation process in which the active site pyruvoyl group is generated from an internal serine residue via an autocatalytic post-translational modification. Two non-identical subunits are generated from the proenzyme in this reaction, and the pyruvate is formed at the N-terminus of the alpha chain, which is derived from the carboxyl end of the proenzyme. The post-translation cleavage follows an unusual pathway, termed non-hydrolytic serinolysis, in which the side chain hydroxyl group of the serine supplies its oxygen atom to form the C-terminus of the beta chain, while the remainder of the serine residue undergoes an oxidative deamination to produce ammonia and the pyruvoyl group blocking the N-terminus of the alpha chain.

It carries out the reaction S-adenosyl-L-methionine + H(+) = S-adenosyl 3-(methylsulfanyl)propylamine + CO2. Its pathway is amine and polyamine biosynthesis; S-adenosylmethioninamine biosynthesis; S-adenosylmethioninamine from S-adenosyl-L-methionine: step 1/1. In terms of biological role, catalyzes the decarboxylation of S-adenosylmethionine to S-adenosylmethioninamine (dcAdoMet), the propylamine donor required for the synthesis of the polyamines spermine and spermidine from the diamine putrescine. This is S-adenosylmethionine decarboxylase proenzyme from Aquifex aeolicus (strain VF5).